A 217-amino-acid polypeptide reads, in one-letter code: Pro-Pro endopeptidase (217 aa).

An N-terminal signal peptide occupies residues 1 to 27 (MKWDKRVVALILAVMIVCPLFAAPAHA). Residues 30–216 (QSILDKLVVL…TYEFMAKLFA (187 aa)) form the ATLF-like domain. The tract at residues 112-115 (SERV) is plays a crucial role in substrate specificity. His-137 lines the Zn(2+) pocket. Residue Glu-138 is the Proton acceptor of the active site. His-141, Tyr-174, and Glu-181 together coordinate Zn(2+).

Belongs to the peptidase M34 family. Pro-Pro endopeptidase subfamily. Monomer. Zn(2+) serves as cofactor.

It is found in the secreted. The catalysed reaction is The enzyme catalyzes the hydrolytic cleavage of peptide bonds between two proline residues.. In terms of biological role, zinc-dependent endoprotease with a unique preference for proline residues surrounding the scissile bond, which cleaves in a PLP-|-PVP motif. Cleaves the cell surface protein encoded by an adjacent gene, which contains two PPEP-2 cleaving sites and putative extracellular matrix-binding domains. Thereby, may have a role in the regulation of P.alvei adhesion. Is not able to cleave within the PVP-|-PVQ motif, and only shows a very poor cleavage of the VNP-|-PVP motif in vitro, which is the optimal substrate peptide for PPEP-1 from P.difficile. The chain is Pro-Pro endopeptidase from Paenibacillus alvei (strain ATCC 6344 / DSM 29 / NBRC 3343 / NCIMB 9371 / NCTC 6352) (Bacillus alvei).